The primary structure comprises 199 residues: Holliday junction branch migration complex subunit RuvA (199 aa).

The interval 1-63 (MIASVRGEVL…EDSMTLYGFS (63 aa)) is domain I. Residues 64-141 (DTESKDLFSL…DAVATTAGAA (78 aa)) form a domain II region. Residues 141–145 (ASGAV) form a flexible linker region. A domain III region spans residues 146–199 (VGSSIRDQIVEALEGLGFPIKQAEQATDSVLAESPEATTSVALRSALSLLGKTR).

It belongs to the RuvA family. As to quaternary structure, homotetramer. Forms an RuvA(8)-RuvB(12)-Holliday junction (HJ) complex. HJ DNA is sandwiched between 2 RuvA tetramers; dsDNA enters through RuvA and exits via RuvB. An RuvB hexamer assembles on each DNA strand where it exits the tetramer. Each RuvB hexamer is contacted by two RuvA subunits (via domain III) on 2 adjacent RuvB subunits; this complex drives branch migration. In the full resolvosome a probable DNA-RuvA(4)-RuvB(12)-RuvC(2) complex forms which resolves the HJ.

The protein localises to the cytoplasm. Its function is as follows. The RuvA-RuvB-RuvC complex processes Holliday junction (HJ) DNA during genetic recombination and DNA repair, while the RuvA-RuvB complex plays an important role in the rescue of blocked DNA replication forks via replication fork reversal (RFR). RuvA specifically binds to HJ cruciform DNA, conferring on it an open structure. The RuvB hexamer acts as an ATP-dependent pump, pulling dsDNA into and through the RuvAB complex. HJ branch migration allows RuvC to scan DNA until it finds its consensus sequence, where it cleaves and resolves the cruciform DNA. The polypeptide is Holliday junction branch migration complex subunit RuvA (Rhodococcus erythropolis (strain PR4 / NBRC 100887)).